We begin with the raw amino-acid sequence, 411 residues long: SKA complex subunit 3 (411 aa).

A phosphoserine mark is found at serine 34, serine 119, serine 138, serine 154, and serine 158. Positions 102–410 (YQARDKEDSG…GTRGAANKEN (309 aa)) are binds the NDC80 complex. Phosphothreonine occurs at positions 189 and 216. Positions 195 to 410 (PSVQVLKTPR…GTRGAANKEN (216 aa)) are binds microtubules and contacts the microtubule-binding domain of SKA1. The residue at position 289 (serine 289) is a Phosphoserine. Threonine 297 carries the post-translational modification Phosphothreonine. Phosphoserine is present on residues serine 324 and serine 352. The interval 349 to 410 (EPPSSAITSC…GTRGAANKEN (62 aa)) is required for localization to kinetochores. Threonine 363 carries the phosphothreonine modification.

This sequence belongs to the SKA3 family. In terms of assembly, component of the SKA complex, composed of SKA1, SKA2 and SKA3. The SKA complex is a homodimer organized around a central W-shaped coiled-coil structure, formed by the interacting domains of SKA1, SKA2, and SKA3, each end of the 'W' is extended further by the C-terminal microtubule-binding domains of SKA1 and SKA3; the complex forms extended structures on microtubules. Interacts with the NDC80-NUF2 heterodimer of the NDC80 complex (via coiled coils); the interaction localizes the SKA complex to the kinetochore and is required to establish kinetochore-microtubule end-on attachments. Interacts with polo-like kinase PLK1.

The protein resides in the cytoplasm. It is found in the cytoskeleton. It localises to the spindle. Its subcellular location is the chromosome. The protein localises to the centromere. The protein resides in the kinetochore. It is found in the microtubule organizing center. It localises to the centrosome. Functionally, component of the SKA complex, a microtubule plus end-binding complex of the outer kinetochore that stabilizes spindle microtubule-kinetochore attachments, promotes alignment of chromosomes at the mitotic spindle equator (chromosome congression) and assists suppression of the spindle assembly checkpoint. Kinetochores, consisting of a centromere-associated inner segment and a microtubule-contacting outer segment, play a crucial role in chromosome segregation by mediating the physical connection between centromeric DNA and spindle microtubules. The outer kinetochore is made up of the ten-subunit KMN network complex, comprising the MIS12, NDC80 and KNL1 complexes, and auxiliary microtubule-associated components such as the SKA complex; together they connect the outer kinetochore with the inner kinetochore, bind microtubules, and mediate interactions with mitotic checkpoint proteins that delay anaphase until chromosomes are bioriented on the spindle. The SKA complex is loaded onto bioriented kinetochores and it facilitates chromosome congression by stabilizing microtubules together with MAPRE1, and end-on attachment of the NDC80 complex to depolymerizing spindle microtubules, thereby assisting the poleward-moving kinetochore in withstanding microtubule pulling forces. The complex associates with dynamic microtubule plus-ends and can track both depolymerizing and elongating microtubules. The complex recruits protein phosphatase 1 (PP1) to the kinetochore in prometaphase and metaphase, to oppose spindle assembly checkpoint signaling and promote the onset of anaphase. Within the complex, binds microtubules but with a much lower affinity than SKA1. Promotes stability of the polo-like kinase PLK1 protein. During meiosis the SKA complex stabilizes the meiotic spindle and is required for its migration to the cortex. The sequence is that of SKA complex subunit 3 (Ska3) from Mus musculus (Mouse).